The sequence spans 251 residues: Ubiquinone/menaquinone biosynthesis C-methyltransferase UbiE (251 aa).

S-adenosyl-L-methionine is bound by residues Thr-74, Asp-95, 123–124 (NA), and Ser-140.

This sequence belongs to the class I-like SAM-binding methyltransferase superfamily. MenG/UbiE family.

The catalysed reaction is a 2-demethylmenaquinol + S-adenosyl-L-methionine = a menaquinol + S-adenosyl-L-homocysteine + H(+). It catalyses the reaction a 2-methoxy-6-(all-trans-polyprenyl)benzene-1,4-diol + S-adenosyl-L-methionine = a 5-methoxy-2-methyl-3-(all-trans-polyprenyl)benzene-1,4-diol + S-adenosyl-L-homocysteine + H(+). It participates in quinol/quinone metabolism; menaquinone biosynthesis; menaquinol from 1,4-dihydroxy-2-naphthoate: step 2/2. The protein operates within cofactor biosynthesis; ubiquinone biosynthesis. Functionally, methyltransferase required for the conversion of demethylmenaquinol (DMKH2) to menaquinol (MKH2) and the conversion of 2-polyprenyl-6-methoxy-1,4-benzoquinol (DDMQH2) to 2-polyprenyl-3-methyl-6-methoxy-1,4-benzoquinol (DMQH2). This is Ubiquinone/menaquinone biosynthesis C-methyltransferase UbiE from Escherichia coli O9:H4 (strain HS).